A 387-amino-acid chain; its full sequence is Small ribosomal subunit protein mS31 (387 aa).

A mitochondrion-targeting transit peptide spans 1-56 (MLHRIPAFIRPRPFSGLPLSCGNREVSVAASVLPAAGSGAVRTENTIQRHFCTSRS). 2 disordered regions span residues 59–83 (SKKDDQSVPANETSQKAAESQGEGK) and 203–228 (KSPSMRVSSRPQHQIQFDEEVDSSLS). Polar residues-rich tracts occupy residues 66–76 (VPANETSQKAA) and 207–217 (MRVSSRPQHQI).

Belongs to the mitochondrion-specific ribosomal protein mS31 family. Component of the mitochondrial ribosome small subunit (28S) which comprises a 12S rRNA and about 30 distinct proteins.

Its subcellular location is the mitochondrion. This Rattus norvegicus (Rat) protein is Small ribosomal subunit protein mS31 (Mrps31).